The sequence spans 318 residues: Nodulation protein D (318 aa).

Positions 6 to 63 (LDLNLLVALDALMTERKLTAAARSINLSQPAMSAAIGRLRAYFNDELFLMQQRRLVPT) constitute an HTH lysR-type domain. A DNA-binding region (H-T-H motif) is located at residues 23-42 (LTAAARSINLSQPAMSAAIG).

This sequence belongs to the LysR transcriptional regulatory family.

In terms of biological role, nodD regulates the expression of the nodABCFE genes which encode other nodulation proteins. NodD is also a negative regulator of its own expression. Binds flavonoids as inducers. This chain is Nodulation protein D (nodD), found in Rhizobium leguminosarum bv. trifolii.